Here is a 252-residue protein sequence, read N- to C-terminus: MAKNAMLCLLILRVVLALAFATNKKGDEEPENHSTGIFGKVGRVVTVALAMSSRLGGADATRGGGAVYGGNLKSNQLPNNNWMAPPPPMAMRSAKVYDSKHSPAEYLKKFAQDFRRKTGMHSQRHHEETTLEQEKRVAGAGPDPIHHQDTTLEQEKRAVPAGPDPKHHEETTLEQEKRVAGAGPDPIHHQDTTLEQEKRAVPAGPDPTHHEETTLEQEKRAVPAGPDPKHHEETTFEQEKRGAPAGPDPIHH.

The signal sequence occupies residues 1-21; the sequence is MAKNAMLCLLILRVVLALAFA. The required for secretion from the host cytoplasm to the host apoplasm stretch occupies residues 21 to 83; that stretch reads ATNKKGDEEP…SNQLPNNNWM (63 aa). Residue N32 is glycosylated (N-linked (GlcNAc...) asparagine). The interval 116–252 is disordered; the sequence is RKTGMHSQRH…APAGPDPIHH (137 aa). Composition is skewed to basic and acidic residues over residues 125–137, 144–179, 186–200, and 207–242; these read HHEE…EKRV, PIHH…EKRV, PIHH…EKRA, and PTHH…EKRG. Residues 127–135 form an A-1 repeat; that stretch reads EETTLEQEK. The interval 127 to 219 is 6 X approximate repeat A; it reads EETTLEQEKR…HEETTLEQEK (93 aa). One copy of the CLE-1 repeat lies at 136–147; it reads RVAGAGPDPIHH. Residues 136–252 are 6 X approximate repeat CLE; it reads RVAGAGPDPI…APAGPDPIHH (117 aa). The stretch at 148-156 is one A-2 repeat; it reads QDTTLEQEK. The CLE-2 repeat unit spans residues 157–168; sequence RAVPAGPDPKHH. One copy of the A-3 repeat lies at 169 to 177; that stretch reads EETTLEQEK. The CLE-3 repeat unit spans residues 178–189; the sequence is RVAGAGPDPIHH. Residues 190–198 form an A-4 repeat; sequence QDTTLEQEK. A CLE-4 repeat occupies 199–210; it reads RAVPAGPDPTHH. The stretch at 211-219 is one A-5 repeat; that stretch reads EETTLEQEK. Residues 220–231 form a CLE-5 repeat; the sequence is RAVPAGPDPKHH. An A-6 repeat occupies 232-240; sequence EETTFEQEK. The CLE-6 repeat unit spans residues 241–252; the sequence is RGAPAGPDPIHH.

It belongs to the CLV3/ESR signal peptide family. In terms of tissue distribution, highly expressed exclusively within the dorsal esophageal gland cell during syncytium formation in host plants.

It is found in the secreted. Its subcellular location is the host cytoplasm. The protein resides in the host extracellular space. The protein localises to the extracellular space. It localises to the apoplast. In terms of biological role, mimics host plant CLE extracellular signal peptides that regulate cell fate. May play a role in the differentiation or division of feeding cells (syncytia) induced in plant roots during infection. The polypeptide is CLAVATA3/ESR (CLE)-related protein 4A-2 (CLE-4A-2) (Globodera rostochiensis (Golden nematode worm)).